The sequence spans 913 residues: E3 ubiquitin-protein ligase ZNRF3 (913 aa).

Residues 1-32 (MRPRSGGRPGAPGRRRRRLRRGPRGRRLPPPP) are disordered. The signal sequence occupies residues 1-52 (MRPRSGGRPGAPGRRRRRLRRGPRGRRLPPPPPLPLLLGLLLAAAGPGAARA). Basic residues predominate over residues 13-27 (GRRRRRLRRGPRGRR). Residues 53–216 (KETAFVEVVL…PRQPTEYFDM (164 aa)) lie on the Extracellular side of the membrane. A helical transmembrane segment spans residues 217–237 (GIFLAFFVVVSLVCLILLVKI). At 238-913 (KLKQRRSQNS…GSGPGIGTGA (676 aa)) the chain is on the cytoplasmic side. The RING-type; atypical zinc-finger motif lies at 290 to 331 (CAICLEKYIDGEELRVIPCTHRFHRKCVDPWLLQHHTCPHCR). Disordered regions lie at residues 601 to 669 (AVHL…GLEV) and 855 to 913 (REEE…GTGA). Composition is skewed to polar residues over residues 634 to 664 (SGDQ…STSE) and 881 to 890 (ASLSSAPQDT). Gly residues predominate over residues 903–913 (PGSGPGIGTGA).

Belongs to the ZNRF3 family. In terms of assembly, interacts with LRP6, FZD4, FZD5, FZD6 and FZD8. Interacts with RSPO1; interaction promotes indirect interaction with LGR4 and membrane clearance of ZNRF3. Interacts with LMBR1L.

It is found in the cell membrane. The enzyme catalyses S-ubiquitinyl-[E2 ubiquitin-conjugating enzyme]-L-cysteine + [acceptor protein]-L-lysine = [E2 ubiquitin-conjugating enzyme]-L-cysteine + N(6)-ubiquitinyl-[acceptor protein]-L-lysine.. It participates in protein modification; protein ubiquitination. Its activity is regulated as follows. Negatively regulated by R-spondin proteins such as RSPO1: interaction with RSPO1 induces the indirect association between ZNRF3 and LGR4, promoting membrane clearance of ZNRF3. Functionally, E3 ubiquitin-protein ligase that acts as a negative regulator of the Wnt signaling pathway by mediating the ubiquitination and subsequent degradation of Wnt receptor complex components Frizzled and LRP6. Acts on both canonical and non-canonical Wnt signaling pathway. Acts as a tumor suppressor in the intestinal stem cell zone by inhibiting the Wnt signaling pathway, thereby restricting the size of the intestinal stem cell zone. Along with RSPO2 and RNF43, constitutes a master switch that governs limb specification. This Mus musculus (Mouse) protein is E3 ubiquitin-protein ligase ZNRF3 (Znrf3).